Consider the following 82-residue polypeptide: Splicing factor U2AF 35 kDa subunit (82 aa).

Position 2 is an N-acetylalanine (alanine 2). Residues 12–40 (EKDKVNCSFYFKIGACRHGDRCSRLHNKP) form a C3H1-type zinc finger. At lysine 39 the chain carries N6-methyllysine. Positions 65–82 (SHCHVSDVEVQEHYDNFF) constitute an RRM domain.

This sequence belongs to the splicing factor SR family. Identified in the spliceosome C complex. Heterodimer with U2AF2. Interacts (via RS domain) with PHF5A (via N-terminus). Interacts with ZRANB2. Interacts with SDE2. Interacts with SF3B1.

The protein localises to the nucleus. Its subcellular location is the nucleus speckle. Functionally, plays a critical role in both constitutive and enhancer-dependent splicing by mediating protein-protein interactions and protein-RNA interactions required for accurate 3'-splice site selection. Recruits U2 snRNP to the branch point. Directly mediates interactions between U2AF2 and proteins bound to the enhancers and thus may function as a bridge between U2AF2 and the enhancer complex to recruit it to the adjacent intron. This is Splicing factor U2AF 35 kDa subunit (U2AF1) from Sus scrofa (Pig).